Here is a 171-residue protein sequence, read N- to C-terminus: ATP synthase subunit b (171 aa).

A helical transmembrane segment spans residues 4–24 (IAFFVICVGFPSLIFASASIQ).

This sequence belongs to the ATPase B chain family. F-type ATPases have 2 components, F(1) - the catalytic core - and F(0) - the membrane proton channel. F(1) has five subunits: alpha(3), beta(3), gamma(1), delta(1), epsilon(1). F(0) has three main subunits: a(1), b(2) and c(10-14). The alpha and beta chains form an alternating ring which encloses part of the gamma chain. F(1) is attached to F(0) by a central stalk formed by the gamma and epsilon chains, while a peripheral stalk is formed by the delta and b chains.

It is found in the cell inner membrane. Functionally, f(1)F(0) ATP synthase produces ATP from ADP in the presence of a proton or sodium gradient. F-type ATPases consist of two structural domains, F(1) containing the extramembraneous catalytic core and F(0) containing the membrane proton channel, linked together by a central stalk and a peripheral stalk. During catalysis, ATP synthesis in the catalytic domain of F(1) is coupled via a rotary mechanism of the central stalk subunits to proton translocation. Component of the F(0) channel, it forms part of the peripheral stalk, linking F(1) to F(0). The sequence is that of ATP synthase subunit b from Helicobacter hepaticus (strain ATCC 51449 / 3B1).